A 303-amino-acid chain; its full sequence is Taste receptor type 2 member 13 (303 aa).

Topologically, residues 1-7 (MESALLS) are extracellular. Residues 8 to 28 (ILTLVIIAEFVIGNLSNGFXV) form a helical membrane-spanning segment. At 29–55 (LINCIDWVSKRQLSSVDKILTFLAISR) the chain is on the cytoplasmic side. Residues 56–76 (IGLIWELLVSWFLGLHYLAIF) traverse the membrane as a helical segment. The Extracellular portion of the chain corresponds to 77 to 85 (VSGTGLRIM). The chain crosses the membrane as a helical span at residues 86–106 (IFSWVVSNHFSLWLATILSIF). Residues 107–128 (YLLKIASFSSPAFLYLKWRVNQ) are Cytoplasmic-facing. The helical transmembrane segment at 129–149 (VILMILLGTLVFLFLNLIQIN) threads the bilayer. Residues 150–184 (IHIKDWLDRCERNTIWNFSMSGLPTFSVPVKFTMT) are Extracellular-facing. An N-linked (GlcNAc...) asparagine glycan is attached at asparagine 166. A helical membrane pass occupies residues 185–205 (MFSLAPFTVALISFLLLIFSL). The Cytoplasmic portion of the chain corresponds to 206–232 (RKHLQKMQLNYKGHREPRTKAHINALK). Residues 233–253 (IVISFLLLYASFFLCILISWI) traverse the membrane as a helical segment. Residues 254–261 (SELYQNTL) lie on the Extracellular side of the membrane. Residues 262–282 (IHMFCQTIGVFYPSSHSFLLI) traverse the membrane as a helical segment. The Cytoplasmic segment spans residues 283 to 303 (LGNPKLRQASLLVAAKVWAKR).

The protein belongs to the G-protein coupled receptor T2R family.

It localises to the membrane. In terms of biological role, receptor that may play a role in the perception of bitterness and is gustducin-linked. May play a role in sensing the chemical composition of the gastrointestinal content. The activity of this receptor may stimulate alpha gustducin, mediate PLC-beta-2 activation and lead to the gating of TRPM5. This Papio hamadryas (Hamadryas baboon) protein is Taste receptor type 2 member 13 (TAS2R13).